Consider the following 332-residue polypeptide: DNA-directed RNA polymerase subunit alpha (332 aa).

The alpha N-terminal domain (alpha-NTD) stretch occupies residues 1–227 (MKKFAETPFL…VMYSQMSVFN (227 aa)). The alpha C-terminal domain (alpha-CTD) stretch occupies residues 248-332 (KELVIRIDDL…LRRKLEQLKA (85 aa)).

Belongs to the RNA polymerase alpha chain family. In terms of assembly, homodimer. The RNAP catalytic core consists of 2 alpha, 1 beta, 1 beta' and 1 omega subunit. When a sigma factor is associated with the core the holoenzyme is formed, which can initiate transcription.

It catalyses the reaction RNA(n) + a ribonucleoside 5'-triphosphate = RNA(n+1) + diphosphate. DNA-dependent RNA polymerase catalyzes the transcription of DNA into RNA using the four ribonucleoside triphosphates as substrates. The polypeptide is DNA-directed RNA polymerase subunit alpha (Aliarcobacter butzleri (strain RM4018) (Arcobacter butzleri)).